An 82-amino-acid polypeptide reads, in one-letter code: Diphthamide biosynthesis protein 3 (82 aa).

Residues isoleucine 8 to glutamate 64 form the DPH-type MB domain. Residues cysteine 30, cysteine 32, cysteine 52, and cysteine 55 each coordinate Fe cation.

Belongs to the DPH3 family. Component of the 2-(3-amino-3-carboxypropyl)histidine synthase complex composed of dph-1, dph-2, dph-3 and a NADH-dependent reductase, predominantly cbr-1. The cofactor is Fe(2+).

The protein resides in the cytoplasm. It is found in the nucleus. The catalysed reaction is [3Fe-4S](1+)-[protein] + Fe(2+)-[Dph3] = [3Fe-4S](0)-[protein] + Fe(3+)-[Dph3]. It catalyses the reaction 2 [3Fe-4S](0)-[protein] + 2 Fe(2+)-[Dph3] + NADH = 2 [4Fe-4S](1+)-[protein] + 2 [Dph3] + NAD(+) + H(+). It participates in protein modification; peptidyl-diphthamide biosynthesis. Its function is as follows. Required for the first step of diphthamide biosynthesis, a post-translational modification of histidine which occurs in elongation factor 2. Dph-1 and dph-2 transfer a 3-amino-3-carboxypropyl (ACP) group from S-adenosyl-L-methionine (SAM) to a histidine residue, the reaction is assisted by a reduction system comprising dph-3 and a NADH-dependent reductase, predominantly cbr-1. Acts as an electron donor to reduce the Fe-S cluster in dph1-dph2 keeping the [4Fe-4S] clusters in the active and reduced state. Restores iron to dph-1-dph-2 iron-sulfur clusters which have degraded from [4Fe-4S] to [3Fe-4S] by donating an iron atom to reform [4Fe-4S] clusters, in a manner dependent on the presence of elongation factor 2 and SAM. Associates with the elongator complex and is required for tRNA Wobble base modifications mediated by the elongator complex. The elongator complex is required for multiple tRNA modifications, including mcm5U (5-methoxycarbonylmethyl uridine), mcm5s 2U (5-methoxycarbonylmethyl-2-thiouridine), and ncm5U (5-carbamoylmethyl uridine). This Neurospora crassa (strain ATCC 24698 / 74-OR23-1A / CBS 708.71 / DSM 1257 / FGSC 987) protein is Diphthamide biosynthesis protein 3 (dph-3).